We begin with the raw amino-acid sequence, 443 residues long: MVKYEDKICLFDAKGNQVAEDVPLEAISPLNNPTIMGMVKNIKRTVAVNLAGIEESLAKGKIGGKGCQVPGTNIELDVIGDAEAIADKVKSILQVSAGDDTEVKLINGGKQMAEQVPSKRLDVAAEYSVSMLSTGMALKEALITNFNIDMFDGSTVHSAIMGQYPQDMDYAGGNIASLLGAPSKLEGLGYALRNIPVNHAVATTKKSLMNAIAFSSILEQTAMFEMGDAVGSFERQHLLGLAYQGLNADNLVVELVKANATGTVGSVVNSIVEKAIADGVIVVDKTLGSGFNMYKPADVNKWNAYAAAGLVAAVMVSCGAARAAQNVASTILYYNDILEYETGLPGVDYGRSMGTAVGFSFFSHSIYGGGGPGIFNGNHVVTRHSKGFAIPPVCAAMCMDAGTQMFSPEKTSALVGTVYSAFDEFREPLKYVIEGALEVQNKL.

Tyr367 provides a ligand contact to coenzyme M. Residue Gly369 participates in coenzyme B binding.

Belongs to the methyl-coenzyme M reductase beta subunit family. MCR is a hexamer of two alpha, two beta, and two gamma chains, forming a dimer of heterotrimers. Requires coenzyme F430 as cofactor.

The protein localises to the cytoplasm. It carries out the reaction coenzyme B + methyl-coenzyme M = methane + coenzyme M-coenzyme B heterodisulfide. It participates in one-carbon metabolism; methyl-coenzyme M reduction; methane from methyl-coenzyme M: step 1/1. In terms of biological role, component of the methyl-coenzyme M reductase (MCR) I that catalyzes the reductive cleavage of methyl-coenzyme M (CoM-S-CH3 or 2-(methylthio)ethanesulfonate) using coenzyme B (CoB or 7-mercaptoheptanoylthreonine phosphate) as reductant which results in the production of methane and the mixed heterodisulfide of CoB and CoM (CoM-S-S-CoB). This is the final step in methanogenesis. The polypeptide is Methyl-coenzyme M reductase subunit beta (mcrB) (Methanococcus voltae).